The chain runs to 397 residues: NADH-quinone oxidoreductase subunit H (397 aa).

9 consecutive transmembrane segments (helical) span residues alanine 7–alanine 27, leucine 78–isoleucine 98, isoleucine 120–alanine 140, methionine 164–valine 184, tryptophan 195–valine 215, methionine 247–glycine 267, serine 283–valine 303, leucine 322–proline 342, and tryptophan 353–valine 373.

Belongs to the complex I subunit 1 family. As to quaternary structure, NDH-1 is composed of 15 different subunits. Subunits NuoA, H, J, K, L, M, N constitute the membrane sector of the complex.

It is found in the cell membrane. The enzyme catalyses a quinone + NADH + 5 H(+)(in) = a quinol + NAD(+) + 4 H(+)(out). NDH-1 shuttles electrons from NADH, via FMN and iron-sulfur (Fe-S) centers, to quinones in the respiratory chain. The immediate electron acceptor for the enzyme in this species is believed to be ubiquinone. Couples the redox reaction to proton translocation (for every two electrons transferred, four hydrogen ions are translocated across the cytoplasmic membrane), and thus conserves the redox energy in a proton gradient. This subunit may bind ubiquinone. This chain is NADH-quinone oxidoreductase subunit H, found in Deinococcus radiodurans (strain ATCC 13939 / DSM 20539 / JCM 16871 / CCUG 27074 / LMG 4051 / NBRC 15346 / NCIMB 9279 / VKM B-1422 / R1).